The chain runs to 155 residues: uncharacterized protein (155 aa).

The N-acetyltransferase domain occupies Thr-6 to Leu-155.

This sequence belongs to the acetyltransferase family.

This is an uncharacterized protein from Chlorobaculum tepidum (strain ATCC 49652 / DSM 12025 / NBRC 103806 / TLS) (Chlorobium tepidum).